Here is a 208-residue protein sequence, read N- to C-terminus: NAD(P)H-quinone oxidoreductase subunit I (208 aa).

4Fe-4S ferredoxin-type domains follow at residues 55 to 84 (GRIHYEFDKCIACEVCVRVCPINLPVVDWV) and 95 to 124 (RNYSIDFGVCIFCGNCVEYCPTNCLSMTEE). Residues Cys64, Cys67, Cys70, Cys74, Cys104, Cys107, Cys110, and Cys114 each coordinate [4Fe-4S] cluster.

It belongs to the complex I 23 kDa subunit family. NDH-1 is composed of at least 11 different subunits. The cofactor is [4Fe-4S] cluster.

It localises to the cellular thylakoid membrane. It carries out the reaction a plastoquinone + NADH + (n+1) H(+)(in) = a plastoquinol + NAD(+) + n H(+)(out). The catalysed reaction is a plastoquinone + NADPH + (n+1) H(+)(in) = a plastoquinol + NADP(+) + n H(+)(out). In terms of biological role, NDH-1 shuttles electrons from an unknown electron donor, via FMN and iron-sulfur (Fe-S) centers, to quinones in the respiratory and/or the photosynthetic chain. The immediate electron acceptor for the enzyme in this species is believed to be plastoquinone. Couples the redox reaction to proton translocation, and thus conserves the redox energy in a proton gradient. In Prochlorococcus marinus (strain MIT 9312), this protein is NAD(P)H-quinone oxidoreductase subunit I.